The chain runs to 65 residues: Weak toxin CM-13b (65 aa).

Disulfide bonds link cysteine 3/cysteine 24, cysteine 6/cysteine 11, cysteine 17/cysteine 42, cysteine 46/cysteine 57, and cysteine 58/cysteine 63.

The protein belongs to the three-finger toxin family. Ancestral subfamily. Orphan group II sub-subfamily. As to expression, expressed by the venom gland.

The protein localises to the secreted. Binds with low affinity to muscular (alpha-1-beta-1-delta-epsilon/CHRNA1-CHRNB1-CHRND-CHRNE) and very low affinity to neuronal (alpha-7/CHRNA7) nicotinic acetylcholine receptor (nAChR). In Naja annulifera (Banded Egyptian cobra), this protein is Weak toxin CM-13b.